Here is a 234-residue protein sequence, read N- to C-terminus: Thrombin-like enzyme ancrod (234 aa).

Positions 1-227 (VIGGDECNIN…YRDWVNNVIA (227 aa)) constitute a Peptidase S1 domain. Disulfide bonds link Cys-7-Cys-141, Cys-28-Cys-44, Cys-78-Cys-232, Cys-120-Cys-188, Cys-152-Cys-167, and Cys-178-Cys-203. Asn-23 carries N-linked (GlcNAc...) asparagine glycosylation. His-43 (charge relay system) is an active-site residue. N-linked (GlcNAc...) asparagine glycosylation occurs at Asn-79. The Charge relay system role is filled by Asp-88. 2 N-linked (GlcNAc...) asparagine glycosylation sites follow: Asn-99 and Asn-148. Catalysis depends on Ser-182, which acts as the Charge relay system. An N-linked (GlcNAc...) asparagine glycan is attached at Asn-229.

Belongs to the peptidase S1 family. Snake venom subfamily. In terms of assembly, monomer. In terms of tissue distribution, expressed by the venom gland.

It localises to the secreted. It carries out the reaction Selective cleavage of Arg-|-Xaa bond in fibrinogen, to form fibrin, and release fibrinopeptide A. The specificity of further degradation of fibrinogen varies with species origin of the enzyme.. Its function is as follows. Thrombin-like snake venom serine protease that acts as an anticoagulant. It cleaves fibrinogen (FGA) to split off the A-fibrinopeptides (A, AY and AP), but not the B-fibrinopeptide. The resulting fibrin polymers are imperfectly formed and much smaller in size (1 to 2 um long) than the fibrin polymers produced by the action of thrombin. These ancrod-induced microthrombi are friable, unstable, urea-soluble and have significantly degraded alpha chains. They do not cross-link to form thrombi. They are markedly susceptible to digestion by plasmin and are rapidly removed from circulation by either reticuloendothelial phagocytosis or normal fibrinolysis, or both. Anticoagulation through the removal of fibrinogen from the blood is rapid, occurring within hours following its administration. It does not activate plasminogen and does not degrade preformed, fully cross-linked thrombin fibrin. It also reduces the level of plasminogen activator inhibitor (PAI) and may stimulate the release of tissue plasminogen activator (PLAT) from the endothelium. The profibrinolytic effect of these 2 actions appears to be limited to local microthrombus degradation. The sequence is that of Thrombin-like enzyme ancrod from Calloselasma rhodostoma (Malayan pit viper).